Here is a 409-residue protein sequence, read N- to C-terminus: N-acetylglucosamine-6-phosphate deacetylase (409 aa).

A divalent metal cation is bound at residue Glu143. Residue 154 to 155 coordinates substrate; it reads AH. Positions 211 and 232 each coordinate a divalent metal cation. Residues 235–236, Arg243, and 269–272 each bind substrate; these read NA and DGIH. Catalysis depends on Asp294, which acts as the Proton donor/acceptor. 328 to 330 provides a ligand contact to substrate; it reads LSG.

This sequence belongs to the metallo-dependent hydrolases superfamily. NagA family. A divalent metal cation serves as cofactor.

It carries out the reaction N-acetyl-D-glucosamine 6-phosphate + H2O = D-glucosamine 6-phosphate + acetate. The protein operates within amino-sugar metabolism; N-acetylneuraminate degradation. Functionally, hydrolyzes the N-glycolyl group from N-glycolylglucosamine 6-phosphate (GlcNGc-6-P) in the N-glycolylneuraminic acid (Neu5Gc) degradation pathway. The polypeptide is N-acetylglucosamine-6-phosphate deacetylase (AMDHD2) (Bos taurus (Bovine)).